We begin with the raw amino-acid sequence, 306 residues long: Dermonecrotic toxin LiSicTox-alphaIA2ai (306 aa).

Positions methionine 1–alanine 18 are cleaved as a signal peptide. The propeptide occupies alanine 19–arginine 26. Histidine 38 is a catalytic residue. Residues glutamate 58 and aspartate 60 each contribute to the Mg(2+) site. The Nucleophile role is filled by histidine 74. 2 disulfide bridges follow: cysteine 78/cysteine 84 and cysteine 80/cysteine 223. Mg(2+) is bound at residue aspartate 118. Asparagine 283 is a glycosylation site (N-linked (GlcNAc...) asparagine).

Belongs to the arthropod phospholipase D family. Class II subfamily. Class IIa sub-subfamily. It depends on Mg(2+) as a cofactor. In terms of tissue distribution, expressed by the venom gland.

It localises to the secreted. It carries out the reaction an N-(acyl)-sphingosylphosphocholine = an N-(acyl)-sphingosyl-1,3-cyclic phosphate + choline. The catalysed reaction is an N-(acyl)-sphingosylphosphoethanolamine = an N-(acyl)-sphingosyl-1,3-cyclic phosphate + ethanolamine. The enzyme catalyses a 1-acyl-sn-glycero-3-phosphocholine = a 1-acyl-sn-glycero-2,3-cyclic phosphate + choline. It catalyses the reaction a 1-acyl-sn-glycero-3-phosphoethanolamine = a 1-acyl-sn-glycero-2,3-cyclic phosphate + ethanolamine. In terms of biological role, dermonecrotic toxins cleave the phosphodiester linkage between the phosphate and headgroup of certain phospholipids (sphingolipid and lysolipid substrates), forming an alcohol (often choline) and a cyclic phosphate. This toxin acts on sphingomyelin (SM). It may also act on ceramide phosphoethanolamine (CPE), lysophosphatidylcholine (LPC) and lysophosphatidylethanolamine (LPE), but not on lysophosphatidylserine (LPS), and lysophosphatidylglycerol (LPG). It acts by transphosphatidylation, releasing exclusively cyclic phosphate products as second products. It induces complement-dependent hemolysis, dermonecrosis, vascular permeability and platelet aggregation. The sequence is that of Dermonecrotic toxin LiSicTox-alphaIA2ai from Loxosceles intermedia (Brown spider).